Consider the following 186-residue polypeptide: CASP-like protein 6 (186 aa).

The Cytoplasmic segment spans residues 1-26; the sequence is MKAGAVESGEISKGAPPRKGLIRGLS. The helical transmembrane segment at 27-47 threads the bilayer; sequence IMDFILRIVAAIATLGSALGM. The Extracellular portion of the chain corresponds to 48 to 72; it reads GTTRQTLPFSTQFVKFRAVFSDVPT. A helical transmembrane segment spans residues 73 to 93; sequence FVFFVTSNSIVCGYLVLSLVL. At 94–110 the chain is on the cytoplasmic side; sequence SFFHIVRSAAVKSRVLQ. Residues 111–131 form a helical membrane-spanning segment; the sequence is VFLDTVMYGLLTTGASAATAI. Residues 132-162 lie on the Extracellular side of the membrane; the sequence is VYEAHYGNSNTNWFPFCRQYNHFCKQISGSL. The chain crosses the membrane as a helical span at residues 163–183; that stretch reads IGSFIAVVLFIILILMSAISI. Topologically, residues 184-186 are cytoplasmic; the sequence is SKH.

This sequence belongs to the Casparian strip membrane proteins (CASP) family. Homodimer and heterodimers.

It localises to the cell membrane. Regulates membrane-cell wall junctions and localized cell wall deposition. Required for establishment of the Casparian strip membrane domain (CSD) and the subsequent formation of Casparian strips, a cell wall modification of the root endodermis that determines an apoplastic barrier between the intraorganismal apoplasm and the extraorganismal apoplasm and prevents lateral diffusion. This is CASP-like protein 6 from Glycine max (Soybean).